Consider the following 186-residue polypeptide: Ribosome-recycling factor (186 aa).

This sequence belongs to the RRF family.

It localises to the cytoplasm. Its function is as follows. Responsible for the release of ribosomes from messenger RNA at the termination of protein biosynthesis. May increase the efficiency of translation by recycling ribosomes from one round of translation to another. This Cytophaga hutchinsonii (strain ATCC 33406 / DSM 1761 / CIP 103989 / NBRC 15051 / NCIMB 9469 / D465) protein is Ribosome-recycling factor.